A 234-amino-acid chain; its full sequence is Nodulation protein NolW (234 aa).

Residues 17-36 (LLCVGLFLFAGIHTTLGATL) traverse the membrane as a helical segment.

It localises to the membrane. Its function is as follows. Regulates cultivar-specific nodulation of soybean. This chain is Nodulation protein NolW (nolW), found in Rhizobium fredii (Sinorhizobium fredii).